Reading from the N-terminus, the 606-residue chain is Elongation factor 4 (606 aa).

A tr-type G domain is found at 10-192; the sequence is ENIRNFSIIA…AIVQQLPAPK (183 aa). GTP is bound by residues 22 to 27 and 139 to 142; these read DHGKST and NKID.

It belongs to the TRAFAC class translation factor GTPase superfamily. Classic translation factor GTPase family. LepA subfamily.

It is found in the cell membrane. It carries out the reaction GTP + H2O = GDP + phosphate + H(+). Its function is as follows. Required for accurate and efficient protein synthesis under certain stress conditions. May act as a fidelity factor of the translation reaction, by catalyzing a one-codon backward translocation of tRNAs on improperly translocated ribosomes. Back-translocation proceeds from a post-translocation (POST) complex to a pre-translocation (PRE) complex, thus giving elongation factor G a second chance to translocate the tRNAs correctly. Binds to ribosomes in a GTP-dependent manner. In Lawsonia intracellularis (strain PHE/MN1-00), this protein is Elongation factor 4.